We begin with the raw amino-acid sequence, 434 residues long: 3-phosphoshikimate 1-carboxyvinyltransferase (434 aa).

Residues Lys22, Ser23, and Arg27 each contribute to the 3-phosphoshikimate site. Lys22 is a phosphoenolpyruvate binding site. Phosphoenolpyruvate contacts are provided by Gly94 and Arg122. Ser167, Gln169, Asp314, and Lys341 together coordinate 3-phosphoshikimate. Gln169 lines the phosphoenolpyruvate pocket. Residue Asp314 is the Proton acceptor of the active site. Residues Arg345 and Arg391 each coordinate phosphoenolpyruvate.

Belongs to the EPSP synthase family. Monomer.

The protein resides in the cytoplasm. The catalysed reaction is 3-phosphoshikimate + phosphoenolpyruvate = 5-O-(1-carboxyvinyl)-3-phosphoshikimate + phosphate. It functions in the pathway metabolic intermediate biosynthesis; chorismate biosynthesis; chorismate from D-erythrose 4-phosphate and phosphoenolpyruvate: step 6/7. Functionally, catalyzes the transfer of the enolpyruvyl moiety of phosphoenolpyruvate (PEP) to the 5-hydroxyl of shikimate-3-phosphate (S3P) to produce enolpyruvyl shikimate-3-phosphate and inorganic phosphate. The sequence is that of 3-phosphoshikimate 1-carboxyvinyltransferase from Leuconostoc mesenteroides subsp. mesenteroides (strain ATCC 8293 / DSM 20343 / BCRC 11652 / CCM 1803 / JCM 6124 / NCDO 523 / NBRC 100496 / NCIMB 8023 / NCTC 12954 / NRRL B-1118 / 37Y).